The following is a 195-amino-acid chain: Cholesin (195 aa).

Positions methionine 1–alanine 78 are disordered. Composition is skewed to basic and acidic residues over residues glycine 8–arginine 18 and glutamate 26–threonine 39. Serine 41, serine 48, and serine 52 each carry phosphoserine. Over residues proline 53–glutamate 77 the composition is skewed to basic and acidic residues. The residue at position 96 (serine 96) is a Phosphoserine.

As to expression, secreted via exosomes, secreted from the instestine, secretion is induced by feeding and cholesterol absorption. Expressed in enterocytes.

The protein resides in the secreted. Functionally, hormone secreted from the intestine in response to cholesterol, where it acts to inhibit cholesterol synthesis in the liver and VLDL secretion,leading to a reduction in circulating cholesterol levels. Acts through binding to its receptor, GPR146. This is Cholesin (Chlsn) from Mus musculus (Mouse).